Consider the following 64-residue polypeptide: Large ribosomal subunit protein bL35c (64 aa).

This sequence belongs to the bacterial ribosomal protein bL35 family.

It localises to the plastid. It is found in the chloroplast. This Trieres chinensis (Marine centric diatom) protein is Large ribosomal subunit protein bL35c.